A 361-amino-acid chain; its full sequence is Phosphoserine aminotransferase (361 aa).

Residues Ser-9 and Arg-42 each coordinate L-glutamate. Pyridoxal 5'-phosphate-binding positions include 76 to 77 (AR), Trp-102, Thr-153, Asp-173, and Gln-196. N6-(pyridoxal phosphate)lysine is present on Lys-197. 238–239 (NT) contributes to the pyridoxal 5'-phosphate binding site.

This sequence belongs to the class-V pyridoxal-phosphate-dependent aminotransferase family. SerC subfamily. In terms of assembly, homodimer. Requires pyridoxal 5'-phosphate as cofactor.

It localises to the cytoplasm. It catalyses the reaction O-phospho-L-serine + 2-oxoglutarate = 3-phosphooxypyruvate + L-glutamate. The catalysed reaction is 4-(phosphooxy)-L-threonine + 2-oxoglutarate = (R)-3-hydroxy-2-oxo-4-phosphooxybutanoate + L-glutamate. The protein operates within amino-acid biosynthesis; L-serine biosynthesis; L-serine from 3-phospho-D-glycerate: step 2/3. Its pathway is cofactor biosynthesis; pyridoxine 5'-phosphate biosynthesis; pyridoxine 5'-phosphate from D-erythrose 4-phosphate: step 3/5. Its function is as follows. Catalyzes the reversible conversion of 3-phosphohydroxypyruvate to phosphoserine and of 3-hydroxy-2-oxo-4-phosphonooxybutanoate to phosphohydroxythreonine. The sequence is that of Phosphoserine aminotransferase from Serratia proteamaculans (strain 568).